Here is a 205-residue protein sequence, read N- to C-terminus: Listeria nuclear targeted protein A (205 aa).

A signal peptide spans 1-36; the sequence is MKKLVAWFNGLSKMWKVVVIIGAVFVVIIALTTGED.

Interacts specifically with host BAHD1.

The protein resides in the secreted. The protein localises to the host nucleus. In terms of biological role, relieves the repression of host cell immune response genes (interferon-stimulated genes) by blocking the recruitment of host BAHD1 to these genes. May modulate interferon-mediated immune response to control bacterial colonization of the host. In Listeria monocytogenes serovar 1/2a (strain ATCC BAA-679 / EGD-e), this protein is Listeria nuclear targeted protein A (lntA).